A 173-amino-acid polypeptide reads, in one-letter code: Crossover junction endodeoxyribonuclease RuvC (173 aa).

Catalysis depends on residues Asp8, Glu67, and Asp139. Mg(2+) contacts are provided by Asp8, Glu67, and Asp139.

The protein belongs to the RuvC family. Homodimer which binds Holliday junction (HJ) DNA. The HJ becomes 2-fold symmetrical on binding to RuvC with unstacked arms; it has a different conformation from HJ DNA in complex with RuvA. In the full resolvosome a probable DNA-RuvA(4)-RuvB(12)-RuvC(2) complex forms which resolves the HJ. Requires Mg(2+) as cofactor.

It localises to the cytoplasm. The enzyme catalyses Endonucleolytic cleavage at a junction such as a reciprocal single-stranded crossover between two homologous DNA duplexes (Holliday junction).. In terms of biological role, the RuvA-RuvB-RuvC complex processes Holliday junction (HJ) DNA during genetic recombination and DNA repair. Endonuclease that resolves HJ intermediates. Cleaves cruciform DNA by making single-stranded nicks across the HJ at symmetrical positions within the homologous arms, yielding a 5'-phosphate and a 3'-hydroxyl group; requires a central core of homology in the junction. The consensus cleavage sequence is 5'-(A/T)TT(C/G)-3'. Cleavage occurs on the 3'-side of the TT dinucleotide at the point of strand exchange. HJ branch migration catalyzed by RuvA-RuvB allows RuvC to scan DNA until it finds its consensus sequence, where it cleaves and resolves the cruciform DNA. Plays a role in recovery after DNA ADP-ribosylation, probably via replication fork reversal. This is Crossover junction endodeoxyribonuclease RuvC from Escherichia coli O127:H6 (strain E2348/69 / EPEC).